Consider the following 156-residue polypeptide: ATP synthase subunit b (156 aa).

A helical transmembrane segment spans residues 3 to 23 (ITFTIFAQSLAFAALIWIVAT).

This sequence belongs to the ATPase B chain family. As to quaternary structure, F-type ATPases have 2 components, F(1) - the catalytic core - and F(0) - the membrane proton channel. F(1) has five subunits: alpha(3), beta(3), gamma(1), delta(1), epsilon(1). F(0) has three main subunits: a(1), b(2) and c(10-14). The alpha and beta chains form an alternating ring which encloses part of the gamma chain. F(1) is attached to F(0) by a central stalk formed by the gamma and epsilon chains, while a peripheral stalk is formed by the delta and b chains.

The protein resides in the cell inner membrane. Functionally, f(1)F(0) ATP synthase produces ATP from ADP in the presence of a proton or sodium gradient. F-type ATPases consist of two structural domains, F(1) containing the extramembraneous catalytic core and F(0) containing the membrane proton channel, linked together by a central stalk and a peripheral stalk. During catalysis, ATP synthesis in the catalytic domain of F(1) is coupled via a rotary mechanism of the central stalk subunits to proton translocation. Component of the F(0) channel, it forms part of the peripheral stalk, linking F(1) to F(0). The polypeptide is ATP synthase subunit b (Xylella fastidiosa (strain 9a5c)).